The chain runs to 566 residues: E3 ubiquitin-protein ligase RNF220 (566 aa).

K277 is covalently cross-linked (Glycyl lysine isopeptide (Lys-Gly) (interchain with G-Cter in SUMO2)). Residues 277-297 (KREGESPTASPHSSATDDLHH) form a disordered region. Residue S390 is modified to Phosphoserine. A coiled-coil region spans residues 485 to 513 (EDSAVTTFEALKARVRELERQLSRGDRYK). The required for targeting to the cytoplasm stretch occupies residues 514–522 (CLICMDSYS). The RING-type zinc-finger motif lies at 514 to 553 (CLICMDSYSMPLTSIQCWHVHCEECWLRTLGAKKLCPQCN).

Interacts with SIN3B. Interacts with CTNNB1 (via Armadillo repeats 2-8). Interacts with USP7 (via MATH domain). Auto-ubiquitinated; leads to proteasomal degradation. As to expression, ubiquitously expressed. Abundant in brain and spinal cord, particularly in the cerebellum and cerebral cortex. In fetal tissues expressed in the cerebellum, spinal cord and cortex.

The protein localises to the cytoplasm. Its subcellular location is the nucleus. It carries out the reaction S-ubiquitinyl-[E2 ubiquitin-conjugating enzyme]-L-cysteine + [acceptor protein]-L-lysine = [E2 ubiquitin-conjugating enzyme]-L-cysteine + N(6)-ubiquitinyl-[acceptor protein]-L-lysine.. It functions in the pathway protein modification; protein ubiquitination. Its function is as follows. E3 ubiquitin-protein ligase that promotes the ubiquitination and proteasomal degradation of SIN3B. Independently of its E3 ligase activity, acts as a CTNNB1 stabilizer through USP7-mediated deubiquitination of CTNNB1 promoting Wnt signaling. Plays a critical role in the regulation of nuclear lamina. The sequence is that of E3 ubiquitin-protein ligase RNF220 (RNF220) from Homo sapiens (Human).